The sequence spans 186 residues: Dirigent protein 4 (186 aa).

Positions 1–20 (MGKNLGLVVSFYLCITFALG) are cleaved as a signal peptide. N-linked (GlcNAc...) asparagine glycans are attached at residues N67, N126, N169, and N180.

The protein belongs to the plant dirigent protein family. As to quaternary structure, homodimer.

Its subcellular location is the secreted. The protein resides in the extracellular space. It localises to the apoplast. Its function is as follows. Dirigent proteins impart stereoselectivity on the phenoxy radical-coupling reaction, yielding optically active lignans from two molecules of coniferyl alcohol in the biosynthesis of lignans, flavonolignans, and alkaloids and thus plays a central role in plant secondary metabolism. This chain is Dirigent protein 4 (DIR4), found in Arabidopsis thaliana (Mouse-ear cress).